A 337-amino-acid chain; its full sequence is Ketol-acid reductoisomerase (NADP(+)) (337 aa).

One can recognise a KARI N-terminal Rossmann domain in the interval Met-1–Thr-180. Residues Tyr-22–Gln-25, Arg-46, Ser-49, Ser-51, and Asp-81–Gln-84 each bind NADP(+). His-106 is an active-site residue. Gly-132 contacts NADP(+). A KARI C-terminal knotted domain is found at Thr-181–Ile-326. Mg(2+) contacts are provided by Asp-189, Glu-193, Glu-225, and Glu-229. Residue Ser-250 participates in substrate binding.

This sequence belongs to the ketol-acid reductoisomerase family. Mg(2+) serves as cofactor.

It catalyses the reaction (2R)-2,3-dihydroxy-3-methylbutanoate + NADP(+) = (2S)-2-acetolactate + NADPH + H(+). The catalysed reaction is (2R,3R)-2,3-dihydroxy-3-methylpentanoate + NADP(+) = (S)-2-ethyl-2-hydroxy-3-oxobutanoate + NADPH + H(+). It functions in the pathway amino-acid biosynthesis; L-isoleucine biosynthesis; L-isoleucine from 2-oxobutanoate: step 2/4. It participates in amino-acid biosynthesis; L-valine biosynthesis; L-valine from pyruvate: step 2/4. In terms of biological role, involved in the biosynthesis of branched-chain amino acids (BCAA). Catalyzes an alkyl-migration followed by a ketol-acid reduction of (S)-2-acetolactate (S2AL) to yield (R)-2,3-dihydroxy-isovalerate. In the isomerase reaction, S2AL is rearranged via a Mg-dependent methyl migration to produce 3-hydroxy-3-methyl-2-ketobutyrate (HMKB). In the reductase reaction, this 2-ketoacid undergoes a metal-dependent reduction by NADPH to yield (R)-2,3-dihydroxy-isovalerate. In Pelagibacter ubique (strain HTCC1062), this protein is Ketol-acid reductoisomerase (NADP(+)).